A 73-amino-acid chain; its full sequence is UPF0154 protein MG335.1 (73 aa).

The chain crosses the membrane as a helical span at residues 6-26 (LALGLGIPLSLLVGMILGYFI).

This sequence belongs to the UPF0154 family.

It is found in the membrane. This Mycoplasma genitalium (strain ATCC 33530 / DSM 19775 / NCTC 10195 / G37) (Mycoplasmoides genitalium) protein is UPF0154 protein MG335.1.